The primary structure comprises 688 residues: Glycine--tRNA ligase beta subunit (688 aa).

Belongs to the class-II aminoacyl-tRNA synthetase family. As to quaternary structure, tetramer of two alpha and two beta subunits.

It is found in the cytoplasm. It catalyses the reaction tRNA(Gly) + glycine + ATP = glycyl-tRNA(Gly) + AMP + diphosphate. This is Glycine--tRNA ligase beta subunit from Vibrio atlanticus (strain LGP32) (Vibrio splendidus (strain Mel32)).